Here is a 72-residue protein sequence, read N- to C-terminus: Crustacean hyperglycemic hormone (72 aa).

Gln-1 is subject to Pyrrolidone carboxylic acid; partial. Disulfide bonds link Cys-7/Cys-43, Cys-23/Cys-39, and Cys-26/Cys-52. Position 72 is a valine amide (Val-72).

This sequence belongs to the arthropod CHH/MIH/GIH/VIH hormone family. In terms of processing, the N-terminus forms pyrrolidone carboxylic acid in isoform CHH-II and is free in isoform CHH-I. Produced by the medulla terminalis X-organ in the eyestalks and transported to the sinus gland where they are stored and released.

It localises to the secreted. In terms of biological role, hormone found in the sinus gland of isopods and decapods which controls the blood sugar level. Has a secretagogue action over the amylase released from the midgut gland. May act as a stress hormone and may be involved in the control of molting and reproduction. The chain is Crustacean hyperglycemic hormone from Cancer pagurus (Rock crab).